Here is a 247-residue protein sequence, read N- to C-terminus: Sugar fermentation stimulation protein homolog (247 aa).

The protein belongs to the SfsA family.

In Oleidesulfovibrio alaskensis (strain ATCC BAA-1058 / DSM 17464 / G20) (Desulfovibrio alaskensis), this protein is Sugar fermentation stimulation protein homolog.